The primary structure comprises 85 residues: Toxin Cll5c* (85 aa).

The first 17 residues, 1–17, serve as a signal peptide directing secretion; it reads MNSLLIITACLVLFVWA. In terms of domain architecture, LCN-type CS-alpha/beta spans 18 to 83; that stretch reads KEGYLVNKST…TYPLPNKSCS (66 aa). 4 disulfides stabilise this stretch: Cys-29–Cys-82, Cys-33–Cys-58, Cys-42–Cys-63, and Cys-46–Cys-65. Positions 84–85 are cleaved as a propeptide — removed by a carboxypeptidase; the sequence is KK.

This sequence belongs to the long (4 C-C) scorpion toxin superfamily. Sodium channel inhibitor family. Beta subfamily. Expressed by the venom gland.

It is found in the secreted. Functionally, beta toxins bind voltage-independently at site-4 of sodium channels (Nav) and shift the voltage of activation toward more negative potentials thereby affecting sodium channel activation and promoting spontaneous and repetitive firing. In Centruroides limpidus (Mexican scorpion), this protein is Toxin Cll5c*.